Reading from the N-terminus, the 454-residue chain is tRNA modification GTPase MnmE (454 aa).

Residues arginine 23, glutamate 80, and lysine 120 each contribute to the (6S)-5-formyl-5,6,7,8-tetrahydrofolate site. Positions 216–377 constitute a TrmE-type G domain; it reads GMKVVIAGRP…LRNHLKQSMG (162 aa). Asparagine 226 contacts K(+). GTP is bound by residues 226-231, 245-251, 270-273, 335-338, and 358-360; these read NAGKSS, TDIAGTT, DTAG, NKAD, and SAR. Serine 230 provides a ligand contact to Mg(2+). K(+) contacts are provided by threonine 245, isoleucine 247, and threonine 250. Threonine 251 is a Mg(2+) binding site. Residue lysine 454 coordinates (6S)-5-formyl-5,6,7,8-tetrahydrofolate.

Belongs to the TRAFAC class TrmE-Era-EngA-EngB-Septin-like GTPase superfamily. TrmE GTPase family. In terms of assembly, homodimer. Heterotetramer of two MnmE and two MnmG subunits. The cofactor is K(+).

It is found in the cytoplasm. Its function is as follows. Exhibits a very high intrinsic GTPase hydrolysis rate. Involved in the addition of a carboxymethylaminomethyl (cmnm) group at the wobble position (U34) of certain tRNAs, forming tRNA-cmnm(5)s(2)U34. This Yersinia enterocolitica serotype O:8 / biotype 1B (strain NCTC 13174 / 8081) protein is tRNA modification GTPase MnmE.